Reading from the N-terminus, the 174-residue chain is Endoribonuclease YbeY (174 aa).

Residues histidine 129, histidine 133, and histidine 139 each contribute to the Zn(2+) site.

This sequence belongs to the endoribonuclease YbeY family. The cofactor is Zn(2+).

The protein resides in the cytoplasm. Functionally, single strand-specific metallo-endoribonuclease involved in late-stage 70S ribosome quality control and in maturation of the 3' terminus of the 16S rRNA. The polypeptide is Endoribonuclease YbeY (Lactobacillus delbrueckii subsp. bulgaricus (strain ATCC 11842 / DSM 20081 / BCRC 10696 / JCM 1002 / NBRC 13953 / NCIMB 11778 / NCTC 12712 / WDCM 00102 / Lb 14)).